A 460-amino-acid chain; its full sequence is MSIEQAKKLDECFPTYKEEFEIPTFKSLGIQNDEYEDSTDSIYLCGNSLGLMPKITRTAINDELNAWSERGVESHFRHPGEEKGLTSWVDIDLPLLPLIAPIVGGKENEVAVMGTLTSNLNAMLMSFYKPSGKKTKILFEKQAFPSDYYAFLNAAKIFGYNEDHLIQIEIKEGKTYIETEDIIETITNHQDELALVCFSGIQYYTGQFFNIGEITECAKSFGITVGWDLAHAVGNVPLQLHDWDVDFAVWCSYKYLNSGPGGIAGIFVHEKHTKDNSIEQFKPRLAGWWGNNASDRFKMLEVFDPIKSALSYRQSNPSVIDVVAVKSSLELFKKVGGISELRKKSVELTGFLQALLTSSKYYIKQEETTDRLGFKILSPLNKGDRGCQLSVLFQPHYEEYSKNIMERVNKYLSDHAIVCDERRPDVIRLAPLPLYNTFSETFIAVQRLIEAMDKIAANEI.

Residues Leu-116, Thr-117, 144 to 147 (FPSD), Ser-199, Asp-228, His-231, and Tyr-253 each bind pyridoxal 5'-phosphate. N6-(pyridoxal phosphate)lysine is present on Lys-254. Trp-288 and Asn-316 together coordinate pyridoxal 5'-phosphate.

It belongs to the kynureninase family. As to quaternary structure, homodimer. Pyridoxal 5'-phosphate serves as cofactor.

It localises to the cytoplasm. It catalyses the reaction L-kynurenine + H2O = anthranilate + L-alanine + H(+). The catalysed reaction is 3-hydroxy-L-kynurenine + H2O = 3-hydroxyanthranilate + L-alanine + H(+). It functions in the pathway amino-acid degradation; L-kynurenine degradation; L-alanine and anthranilate from L-kynurenine: step 1/1. It participates in cofactor biosynthesis; NAD(+) biosynthesis; quinolinate from L-kynurenine: step 2/3. In terms of biological role, catalyzes the cleavage of L-kynurenine (L-Kyn) and L-3-hydroxykynurenine (L-3OHKyn) into anthranilic acid (AA) and 3-hydroxyanthranilic acid (3-OHAA), respectively. This Debaryomyces hansenii (strain ATCC 36239 / CBS 767 / BCRC 21394 / JCM 1990 / NBRC 0083 / IGC 2968) (Yeast) protein is Kynureninase.